The chain runs to 340 residues: Probable rRNA-processing protein EBP2 homolog (340 aa).

Residues 1-10 (MVRKMNKLAK) are compositionally biased toward basic residues. 2 disordered regions span residues 1-59 (MVRK…DDDE) and 245-340 (HGLD…RGRR). 2 stretches are compositionally biased toward acidic residues: residues 23–37 (PESD…FDNA) and 46–59 (MDIE…DDDE). Positions 206-245 (QKEVLAAKNTEKKNLAEAVKKHKKGMKQQLEDMLNNVKRH) form a coiled coil. Composition is skewed to gly residues over residues 264–277 (GRGG…GRGG) and 318–333 (PRGG…GRGG).

This sequence belongs to the EBP2 family.

The protein resides in the nucleus. It localises to the nucleolus. Required for the processing of the 27S pre-rRNA. The protein is Probable rRNA-processing protein EBP2 homolog of Caenorhabditis elegans.